Here is a 763-residue protein sequence, read N- to C-terminus: 5-methyltetrahydropteroyltriglutamate--homocysteine methyltransferase (763 aa).

Residues 16–19 (RELK) and Lys117 each bind 5-methyltetrahydropteroyltri-L-glutamate. L-homocysteine-binding positions include 438 to 440 (IGS) and Glu491. L-methionine is bound by residues 438–440 (IGS) and Glu491. 5-methyltetrahydropteroyltri-L-glutamate is bound by residues 522–523 (RC) and Trp568. L-homocysteine is bound at residue Asp606. L-methionine is bound at residue Asp606. Glu612 is a binding site for 5-methyltetrahydropteroyltri-L-glutamate. Residues His648, Cys650, and Glu672 each coordinate Zn(2+). The active-site Proton donor is the His701. Cys733 provides a ligand contact to Zn(2+).

It belongs to the vitamin-B12 independent methionine synthase family. The cofactor is Zn(2+).

The catalysed reaction is 5-methyltetrahydropteroyltri-L-glutamate + L-homocysteine = tetrahydropteroyltri-L-glutamate + L-methionine. It participates in amino-acid biosynthesis; L-methionine biosynthesis via de novo pathway; L-methionine from L-homocysteine (MetE route): step 1/1. Its function is as follows. Catalyzes the transfer of a methyl group from 5-methyltetrahydrofolate to homocysteine resulting in methionine formation. This Pseudomonas paraeruginosa (strain DSM 24068 / PA7) (Pseudomonas aeruginosa (strain PA7)) protein is 5-methyltetrahydropteroyltriglutamate--homocysteine methyltransferase.